We begin with the raw amino-acid sequence, 724 residues long: 1,4-alpha-glucan branching enzyme GlgB 1 (724 aa).

The active-site Nucleophile is the Asp403. Glu456 serves as the catalytic Proton donor.

The protein belongs to the glycosyl hydrolase 13 family. GlgB subfamily. As to quaternary structure, monomer.

The catalysed reaction is Transfers a segment of a (1-&gt;4)-alpha-D-glucan chain to a primary hydroxy group in a similar glucan chain.. The protein operates within glycan biosynthesis; glycogen biosynthesis. Its function is as follows. Catalyzes the formation of the alpha-1,6-glucosidic linkages in glycogen by scission of a 1,4-alpha-linked oligosaccharide from growing alpha-1,4-glucan chains and the subsequent attachment of the oligosaccharide to the alpha-1,6 position. This chain is 1,4-alpha-glucan branching enzyme GlgB 1, found in Xanthomonas campestris pv. campestris (strain 8004).